A 364-amino-acid chain; its full sequence is Putative methylthioribose-1-phosphate isomerase (364 aa).

Residues arginine 57–alanine 59, arginine 100, and glutamine 206 contribute to the substrate site. Aspartate 247 (proton donor) is an active-site residue. Asparagine 257–lysine 258 is a binding site for substrate.

This sequence belongs to the eIF-2B alpha/beta/delta subunits family. MtnA subfamily.

It carries out the reaction 5-(methylsulfanyl)-alpha-D-ribose 1-phosphate = 5-(methylsulfanyl)-D-ribulose 1-phosphate. In terms of biological role, catalyzes the interconversion of methylthioribose-1-phosphate (MTR-1-P) into methylthioribulose-1-phosphate (MTRu-1-P). In Pyrococcus horikoshii (strain ATCC 700860 / DSM 12428 / JCM 9974 / NBRC 100139 / OT-3), this protein is Putative methylthioribose-1-phosphate isomerase.